The chain runs to 202 residues: Small ribosomal subunit protein uS4 (202 aa).

The region spanning 94 to 157 is the S4 RNA-binding domain; that stretch reads SRLDSLVYRA…LEIPLIKNTL (64 aa).

Belongs to the universal ribosomal protein uS4 family. As to quaternary structure, part of the 30S ribosomal subunit. Contacts protein S5. The interaction surface between S4 and S5 is involved in control of translational fidelity.

In terms of biological role, one of the primary rRNA binding proteins, it binds directly to 16S rRNA where it nucleates assembly of the body of the 30S subunit. With S5 and S12 plays an important role in translational accuracy. In Ureaplasma parvum serovar 3 (strain ATCC 27815 / 27 / NCTC 11736), this protein is Small ribosomal subunit protein uS4.